The sequence spans 394 residues: Chorismate synthase (394 aa).

An NADP(+)-binding site is contributed by Arg62. Residues 144-146, Gly307, 322-326, and Arg349 contribute to the FMN site; these read RAS and KPTPT.

The protein belongs to the chorismate synthase family. In terms of assembly, homotetramer. It depends on FMNH2 as a cofactor.

The enzyme catalyses 5-O-(1-carboxyvinyl)-3-phosphoshikimate = chorismate + phosphate. It functions in the pathway metabolic intermediate biosynthesis; chorismate biosynthesis; chorismate from D-erythrose 4-phosphate and phosphoenolpyruvate: step 7/7. Catalyzes the anti-1,4-elimination of the C-3 phosphate and the C-6 proR hydrogen from 5-enolpyruvylshikimate-3-phosphate (EPSP) to yield chorismate, which is the branch point compound that serves as the starting substrate for the three terminal pathways of aromatic amino acid biosynthesis. This reaction introduces a second double bond into the aromatic ring system. The polypeptide is Chorismate synthase (Acetivibrio thermocellus (strain ATCC 27405 / DSM 1237 / JCM 9322 / NBRC 103400 / NCIMB 10682 / NRRL B-4536 / VPI 7372) (Clostridium thermocellum)).